A 388-amino-acid chain; its full sequence is Formate-dependent phosphoribosylglycinamide formyltransferase (388 aa).

Residues 11–12 (EL) and Glu71 contribute to the N(1)-(5-phospho-beta-D-ribosyl)glycinamide site. ATP is bound by residues Arg103, Lys144, 149-154 (SSGKGQ), 184-187 (EEFI), and Glu192. The region spanning 108–300 (DLAAKELGLK…EFELHLRAVL (193 aa)) is the ATP-grasp domain. Mg(2+) is bound by residues Glu257 and Glu270. N(1)-(5-phospho-beta-D-ribosyl)glycinamide contacts are provided by residues Asp277, Lys349, and 356-357 (RR).

Belongs to the PurK/PurT family. As to quaternary structure, homodimer.

It carries out the reaction N(1)-(5-phospho-beta-D-ribosyl)glycinamide + formate + ATP = N(2)-formyl-N(1)-(5-phospho-beta-D-ribosyl)glycinamide + ADP + phosphate + H(+). It functions in the pathway purine metabolism; IMP biosynthesis via de novo pathway; N(2)-formyl-N(1)-(5-phospho-D-ribosyl)glycinamide from N(1)-(5-phospho-D-ribosyl)glycinamide (formate route): step 1/1. In terms of biological role, involved in the de novo purine biosynthesis. Catalyzes the transfer of formate to 5-phospho-ribosyl-glycinamide (GAR), producing 5-phospho-ribosyl-N-formylglycinamide (FGAR). Formate is provided by PurU via hydrolysis of 10-formyl-tetrahydrofolate. This is Formate-dependent phosphoribosylglycinamide formyltransferase from Bacteroides thetaiotaomicron (strain ATCC 29148 / DSM 2079 / JCM 5827 / CCUG 10774 / NCTC 10582 / VPI-5482 / E50).